We begin with the raw amino-acid sequence, 342 residues long: Cell cycle control protein 50C (342 aa).

Residues 1-33 are Cytoplasmic-facing; sequence MEMMPQYDLSRLPENTALKQQTLPTQQLNLSAS. The helical transmembrane segment at 34 to 54 threads the bilayer; that stretch reads VVLSIFFITGGFCLSIGIILL. Topologically, residues 55–306 are extracellular; that stretch reads LSAKSTKKIE…STLTWIGGGG (252 aa). Asn66, Asn80, Asn89, and Asn205 each carry an N-linked (GlcNAc...) asparagine glycan. The helical transmembrane segment at 307–327 threads the bilayer; sequence LFLGLTYTVTGALTLLASFAI. At 328-342 the chain is on the cytoplasmic side; the sequence is LTIHLMLKRSKLNFL.

The protein belongs to the CDC50/LEM3 family. In terms of tissue distribution, specifically expressed in testis.

The protein resides in the membrane. This Mus musculus (Mouse) protein is Cell cycle control protein 50C (Tmem30c).